We begin with the raw amino-acid sequence, 358 residues long: Phospho-N-acetylmuramoyl-pentapeptide-transferase (358 aa).

Transmembrane regions (helical) follow at residues 24–44 (FRSI…GPWV), 73–93 (TMGG…WADL), 95–115 (NVFI…GFVD), 134–154 (MFWQ…LPGF), 169–189 (ELGI…SNAV), 197–217 (GLAI…CYIA), 233–253 (GAGE…GFLW), 261–281 (VFMG…LAVL), 286–306 (ILLV…IFQV), and 335–355 (KIIV…ISTL).

It belongs to the glycosyltransferase 4 family. MraY subfamily. Requires Mg(2+) as cofactor.

The protein localises to the cell inner membrane. It carries out the reaction UDP-N-acetyl-alpha-D-muramoyl-L-alanyl-gamma-D-glutamyl-meso-2,6-diaminopimeloyl-D-alanyl-D-alanine + di-trans,octa-cis-undecaprenyl phosphate = di-trans,octa-cis-undecaprenyl diphospho-N-acetyl-alpha-D-muramoyl-L-alanyl-D-glutamyl-meso-2,6-diaminopimeloyl-D-alanyl-D-alanine + UMP. It functions in the pathway cell wall biogenesis; peptidoglycan biosynthesis. Functionally, catalyzes the initial step of the lipid cycle reactions in the biosynthesis of the cell wall peptidoglycan: transfers peptidoglycan precursor phospho-MurNAc-pentapeptide from UDP-MurNAc-pentapeptide onto the lipid carrier undecaprenyl phosphate, yielding undecaprenyl-pyrophosphoryl-MurNAc-pentapeptide, known as lipid I. This chain is Phospho-N-acetylmuramoyl-pentapeptide-transferase, found in Citrifermentans bemidjiense (strain ATCC BAA-1014 / DSM 16622 / JCM 12645 / Bem) (Geobacter bemidjiensis).